A 239-amino-acid chain; its full sequence is Flagellin B3 (239 aa).

Residues M1 to G11 constitute a propeptide that is removed on maturation. Residues N115 and N128 are each glycosylated (N-linked (GlcNAc...) asparagine).

Belongs to the archaeal flagellin family. N-linked glycans consist of the 779 Da trisaccharide beta-ManNAc(Thr)-(1-4)-beta-GlcNAc3NAcA-(1-3)-beta-GlcNAc.

It is found in the archaeal flagellum. Its function is as follows. Flagellin is the subunit protein which polymerizes to form the filaments of archaeal flagella. This is Flagellin B3 (flaB3) from Methanococcus voltae.